The following is a 345-amino-acid chain: Heat-inducible transcription repressor HrcA (345 aa).

The protein belongs to the HrcA family.

Negative regulator of class I heat shock genes (grpE-dnaK-dnaJ and groELS operons). Prevents heat-shock induction of these operons. The sequence is that of Heat-inducible transcription repressor HrcA from Lachnoclostridium phytofermentans (strain ATCC 700394 / DSM 18823 / ISDg) (Clostridium phytofermentans).